Reading from the N-terminus, the 678-residue chain is DNA ligase (678 aa).

NAD(+) contacts are provided by residues 34–38 (DSEYD), 83–84 (SL), and Glu-114. The active-site N6-AMP-lysine intermediate is Lys-116. NAD(+)-binding residues include Arg-137, Glu-176, Lys-293, and Lys-317. Residues Cys-411, Cys-414, Cys-429, and Cys-435 each contribute to the Zn(2+) site. The BRCT domain maps to 594 to 678 (PTRQPLNGES…LMAGYGQTLS (85 aa)).

Belongs to the NAD-dependent DNA ligase family. LigA subfamily. It depends on Mg(2+) as a cofactor. Mn(2+) serves as cofactor.

The enzyme catalyses NAD(+) + (deoxyribonucleotide)n-3'-hydroxyl + 5'-phospho-(deoxyribonucleotide)m = (deoxyribonucleotide)n+m + AMP + beta-nicotinamide D-nucleotide.. In terms of biological role, DNA ligase that catalyzes the formation of phosphodiester linkages between 5'-phosphoryl and 3'-hydroxyl groups in double-stranded DNA using NAD as a coenzyme and as the energy source for the reaction. It is essential for DNA replication and repair of damaged DNA. This Acinetobacter baumannii (strain SDF) protein is DNA ligase.